The primary structure comprises 272 residues: Proteasome subunit beta type-5 (272 aa).

Positions 1 to 62 (MINIDFDNIE…APKALEFAHG (62 aa)) are cleaved as a propeptide — removed in mature form. Thr-63 functions as the Nucleophile in the catalytic mechanism.

Belongs to the peptidase T1B family. In terms of assembly, the 26S proteasome consists of a 20S proteasome core and two 19S regulatory subunits. The 20S proteasome core is composed of 28 subunits that are arranged in four stacked rings, resulting in a barrel-shaped structure. The two end rings are each formed by seven alpha subunits, and the two central rings are each formed by seven beta subunits. The catalytic chamber with the active sites is on the inside of the barrel.

The protein resides in the cytoplasm. It is found in the nucleus. The enzyme catalyses Cleavage of peptide bonds with very broad specificity.. In terms of biological role, the proteasome is a multicatalytic proteinase complex which is characterized by its ability to cleave peptides with Arg, Phe, Tyr, Leu, and Glu adjacent to the leaving group at neutral or slightly basic pH. The proteasome has an ATP-dependent proteolytic activity. This is Proteasome subunit beta type-5 (psmB5) from Dictyostelium discoideum (Social amoeba).